A 154-amino-acid polypeptide reads, in one-letter code: MRCPYCQSEDTQVKDSRPAEDGAAIRRRRACPVCGGRFTTFERVQLRDLVVVKRTGRKVPFDRDKLHRSFEIALRKRNVDPDRVERAVTGIVRQLESFGENEISTDDIGLLVMEALKSLDDVAYVRYASVYRNFREAKDFQDVLGELRGEPELE.

Residues 3 to 34 fold into a zinc finger; the sequence is CPYCQSEDTQVKDSRPAEDGAAIRRRRACPVC. Positions 49–139 constitute an ATP-cone domain; sequence LVVVKRTGRK…VYRNFREAKD (91 aa).

This sequence belongs to the NrdR family. Requires Zn(2+) as cofactor.

Functionally, negatively regulates transcription of bacterial ribonucleotide reductase nrd genes and operons by binding to NrdR-boxes. The sequence is that of Transcriptional repressor NrdR from Chelativorans sp. (strain BNC1).